Here is a 104-residue protein sequence, read N- to C-terminus: Succinate dehydrogenase assembly factor 4, mitochondrial (104 aa).

Residues 1–30 constitute a mitochondrion transit peptide; the sequence is MVSTTLSVSRMTFVWRAARPSLLNHSLRKM. Residues 29–104 form a disordered region; the sequence is KMSYQEGKPE…WERKGRCIDF (76 aa). Basic and acidic residues-rich tracts occupy residues 63-83 and 91-104; these read EREP…EKGG and RYGD…CIDF.

The protein belongs to the SDHAF4 family. As to quaternary structure, interacts with Sdha in its FAD-bound form.

It is found in the mitochondrion matrix. Its function is as follows. Plays an essential role in the assembly of succinate dehydrogenase (SDH), an enzyme complex (also referred to as respiratory complex II) that is a component of both the tricarboxylic acid (TCA) cycle and the mitochondrial electron transport chain, and which couples the oxidation of succinate to fumarate with the reduction of ubiquinone (coenzyme Q) to ubiquinol. Binds to the flavoprotein subunit Sdha in its FAD-bound form, blocking the generation of excess reactive oxygen species (ROS) and facilitating its assembly with the iron-sulfur protein subunit Sdhb into the SDH catalytic dimer. The polypeptide is Succinate dehydrogenase assembly factor 4, mitochondrial (Mus musculus (Mouse)).